We begin with the raw amino-acid sequence, 343 residues long: 7-epi-alpha-eudesmol synthase ((2E,6E)-farnesyl diphosphate cyclizing) (343 aa).

Positions 80 and 84 each coordinate Mg(2+). Positions 80–84 (DDQFD) match the DDXXD motif motif. Position 177 (arginine 177) interacts with substrate. Asparagine 223 and serine 227 together coordinate Mg(2+). Arginine 230 provides a ligand contact to substrate. Glutamate 231 provides a ligand contact to Mg(2+). 317 to 318 (RY) contacts substrate.

It belongs to the terpene synthase family. It depends on Mg(2+) as a cofactor.

The enzyme catalyses (2E,6E)-farnesyl diphosphate + H2O = 7-epi-alpha-eudesmol + diphosphate. It participates in secondary metabolite biosynthesis; terpenoid biosynthesis. Functionally, catalyzes the conversion of (2E,6E)-farnesyl diphosphate (FPP) to yield the bicyclic sesquiterpenol 7-epi-alpha-eudesmol via a 1,10-cyclization, which requires the abstraction of the pyrophosphate from FPP to yield the (E,E)-germacradienyl cation. The only accepted substrate is (2E,6E)-farnesyl diphosphate (FPP). The polypeptide is 7-epi-alpha-eudesmol synthase ((2E,6E)-farnesyl diphosphate cyclizing) (Streptomyces viridochromogenes (strain DSM 40736 / JCM 4977 / BCRC 1201 / Tue 494)).